We begin with the raw amino-acid sequence, 150 residues long: uncharacterized protein (150 aa).

A helical membrane pass occupies residues 19-39 (SLGMCVILIDGLIVLTAAFVF).

It to B.subtilis YpjC, YqfU and YitT.

It localises to the cell membrane. This is an uncharacterized protein from Bacillus sp. (strain PS3).